Here is a 164-residue protein sequence, read N- to C-terminus: MTGAVCPGSFDPVTNGHLDVIGRAAAQFDEVIVTVMVNKSKRGLFTVEERIEMLEDSTSELPNVRVSSWHGLLVDYAKQQGITAIVKGLRGANDFDYELQMAQMNQKLSGVDTLFIPTNPTYSYLSSSLVKEVATFGGDVSDMLPEKVHARLLARIAERAAESS.

Ser9 serves as a coordination point for substrate. ATP contacts are provided by residues 9-10 (SF) and His17. Substrate is bound by residues Lys41, Leu73, and Lys87. Residues 88-90 (GLR), Glu98, and 122-128 (YSYLSSS) each bind ATP.

This sequence belongs to the bacterial CoaD family. In terms of assembly, homohexamer. Requires Mg(2+) as cofactor.

Its subcellular location is the cytoplasm. It catalyses the reaction (R)-4'-phosphopantetheine + ATP + H(+) = 3'-dephospho-CoA + diphosphate. Its pathway is cofactor biosynthesis; coenzyme A biosynthesis; CoA from (R)-pantothenate: step 4/5. Reversibly transfers an adenylyl group from ATP to 4'-phosphopantetheine, yielding dephospho-CoA (dPCoA) and pyrophosphate. This chain is Phosphopantetheine adenylyltransferase, found in Rhodococcus jostii (strain RHA1).